Consider the following 54-residue polypeptide: Large ribosomal subunit protein bL33C (54 aa).

This sequence belongs to the bacterial ribosomal protein bL33 family.

This is Large ribosomal subunit protein bL33C (rpmG3) from Streptomyces coelicolor (strain ATCC BAA-471 / A3(2) / M145).